The primary structure comprises 902 residues: Gamma-tubulin complex component 2 (902 aa).

Tyrosine 83 carries the phosphotyrosine modification. Positions 874–902 are disordered; sequence AERSQKATPQVPVLRGPPAPAPRVAVTAQ.

This sequence belongs to the TUBGCP family. In terms of assembly, component of the gamma-tubulin ring complex (gTuRC) consisting of TUBGCP2, TUBGCP3, TUBGCP4, TUBGCP5 and TUBGCP6 and gamma-tubulin TUBG1 or TUBG2. TUBGCP2, TUBGCP3, TUBGCP4, TUBGCP5 and TUBGCP6 assemble in a 5:5:2:1:1 stoichiometry; each is associated with a gamma-tubulin, thereby arranging 14 gamma-tubulins in a helical manner. Gamma-tubulin at the first position is blocked by TUBGCP3 at the last position, allowing 13 protafilaments to grow into a microtubule. The gTuRC (via TUBGCP3 and TUBGCP6) interacts with ACTB and MZT1; the interactions form a luminal bridge that stabilizes the initial structure during complex assembly. The gTuRC (via TUBGCP2) interacts with MZT2A/MZT2B and CDK5RAP2 (via CM1 motif); the interactions play a role in gTuRC activation. Interacts with ATF5; the ATF5:PCNT:polyglutamylated tubulin (PGT) tripartite unites the mother centriole and the pericentriolar material (PCM) in the centrosome. As to expression, ubiquitously expressed.

The protein localises to the cytoplasm. The protein resides in the cytoskeleton. It localises to the microtubule organizing center. Its subcellular location is the centrosome. Functionally, component of the gamma-tubulin ring complex (gTuRC) which mediates microtubule nucleation. The gTuRC regulates the minus-end nucleation of alpha-beta tubulin heterodimers that grow into microtubule protafilaments, a critical step in centrosome duplication and spindle formation. Plays a role in neuronal migration. This Homo sapiens (Human) protein is Gamma-tubulin complex component 2 (TUBGCP2).